The primary structure comprises 405 residues: Eukaryotic initiation factor 4A (405 aa).

A Q motif motif is present at residues proline 32–glutamine 60. Residues isoleucine 63–isoleucine 233 form the Helicase ATP-binding domain. Alanine 76–threonine 83 contacts ATP. The DEAD box signature appears at aspartate 181–aspartate 184. Residues glycine 244–isoleucine 405 enclose the Helicase C-terminal domain.

This sequence belongs to the DEAD box helicase family. eIF4A subfamily.

Its subcellular location is the cytoplasm. It carries out the reaction ATP + H2O = ADP + phosphate + H(+). Its function is as follows. ATP-dependent RNA helicase which is a subunit of the eIF4F complex involved in cap recognition and is required for mRNA binding to ribosome. In the current model of translation initiation, eIF4A unwinds RNA secondary structures in the 5'-UTR of mRNAs which is necessary to allow efficient binding of the small ribosomal subunit, and subsequent scanning for the initiator codon. The sequence is that of Eukaryotic initiation factor 4A (tifA) from Dictyostelium discoideum (Social amoeba).